We begin with the raw amino-acid sequence, 346 residues long: Holliday junction branch migration complex subunit RuvB (346 aa).

The tract at residues 4–185 (SDRIITASPF…FGIVSRLEFY (182 aa)) is large ATPase domain (RuvB-L). Residues L24, R25, G66, K69, T70, T71, 132-134 (EDY), R175, Y185, and R222 contribute to the ATP site. Mg(2+) is bound at residue T70. The interval 186-256 (TSDELSKIVT…VADAALQMLD (71 aa)) is small ATPAse domain (RuvB-S). The interval 259-346 (AAGLDVLDRK…AATPGLFNPD (88 aa)) is head domain (RuvB-H). DNA is bound by residues R295, R314, and R319.

It belongs to the RuvB family. Homohexamer. Forms an RuvA(8)-RuvB(12)-Holliday junction (HJ) complex. HJ DNA is sandwiched between 2 RuvA tetramers; dsDNA enters through RuvA and exits via RuvB. An RuvB hexamer assembles on each DNA strand where it exits the tetramer. Each RuvB hexamer is contacted by two RuvA subunits (via domain III) on 2 adjacent RuvB subunits; this complex drives branch migration. In the full resolvosome a probable DNA-RuvA(4)-RuvB(12)-RuvC(2) complex forms which resolves the HJ.

The protein resides in the cytoplasm. The enzyme catalyses ATP + H2O = ADP + phosphate + H(+). Its function is as follows. The RuvA-RuvB-RuvC complex processes Holliday junction (HJ) DNA during genetic recombination and DNA repair, while the RuvA-RuvB complex plays an important role in the rescue of blocked DNA replication forks via replication fork reversal (RFR). RuvA specifically binds to HJ cruciform DNA, conferring on it an open structure. The RuvB hexamer acts as an ATP-dependent pump, pulling dsDNA into and through the RuvAB complex. RuvB forms 2 homohexamers on either side of HJ DNA bound by 1 or 2 RuvA tetramers; 4 subunits per hexamer contact DNA at a time. Coordinated motions by a converter formed by DNA-disengaged RuvB subunits stimulates ATP hydrolysis and nucleotide exchange. Immobilization of the converter enables RuvB to convert the ATP-contained energy into a lever motion, pulling 2 nucleotides of DNA out of the RuvA tetramer per ATP hydrolyzed, thus driving DNA branch migration. The RuvB motors rotate together with the DNA substrate, which together with the progressing nucleotide cycle form the mechanistic basis for DNA recombination by continuous HJ branch migration. Branch migration allows RuvC to scan DNA until it finds its consensus sequence, where it cleaves and resolves cruciform DNA. This is Holliday junction branch migration complex subunit RuvB from Nitrosomonas eutropha (strain DSM 101675 / C91 / Nm57).